The primary structure comprises 112 residues: UPF0235 protein RHE_CH03912 (112 aa).

The protein belongs to the UPF0235 family.

This Rhizobium etli (strain ATCC 51251 / DSM 11541 / JCM 21823 / NBRC 15573 / CFN 42) protein is UPF0235 protein RHE_CH03912.